Consider the following 268-residue polypeptide: NADPH-dependent 7-cyano-7-deazaguanine reductase (268 aa).

79–81 is a binding site for substrate; the sequence is VES. 81-82 is an NADPH binding site; the sequence is SK. The Thioimide intermediate role is filled by cysteine 176. Residue aspartate 183 is the Proton donor of the active site. 215–216 serves as a coordination point for substrate; that stretch reads HE. 244 to 245 contacts NADPH; sequence RG.

The protein belongs to the GTP cyclohydrolase I family. QueF type 2 subfamily. Homodimer.

It localises to the cytoplasm. The enzyme catalyses 7-aminomethyl-7-carbaguanine + 2 NADP(+) = 7-cyano-7-deazaguanine + 2 NADPH + 3 H(+). Its pathway is tRNA modification; tRNA-queuosine biosynthesis. Functionally, catalyzes the NADPH-dependent reduction of 7-cyano-7-deazaguanine (preQ0) to 7-aminomethyl-7-deazaguanine (preQ1). The polypeptide is NADPH-dependent 7-cyano-7-deazaguanine reductase (Saccharophagus degradans (strain 2-40 / ATCC 43961 / DSM 17024)).